Reading from the N-terminus, the 336-residue chain is Ketol-acid reductoisomerase (NADP(+)) 1 (336 aa).

The region spanning 2–181 is the KARI N-terminal Rossmann domain; the sequence is AKVYYEKDVT…GATRAGVLET (180 aa). Residues 25–28, R48, S52, and 82–85 contribute to the NADP(+) site; these read YGSQ and DELQ. H107 is a catalytic residue. G133 is a binding site for NADP(+). In terms of domain architecture, KARI C-terminal knotted spans 182–327; it reads TFKEETETDL…RKLREMMPFV (146 aa). Mg(2+)-binding residues include D190, E194, E226, and E230. S251 provides a ligand contact to substrate.

It belongs to the ketol-acid reductoisomerase family. The cofactor is Mg(2+).

It carries out the reaction (2R)-2,3-dihydroxy-3-methylbutanoate + NADP(+) = (2S)-2-acetolactate + NADPH + H(+). The catalysed reaction is (2R,3R)-2,3-dihydroxy-3-methylpentanoate + NADP(+) = (S)-2-ethyl-2-hydroxy-3-oxobutanoate + NADPH + H(+). It participates in amino-acid biosynthesis; L-isoleucine biosynthesis; L-isoleucine from 2-oxobutanoate: step 2/4. The protein operates within amino-acid biosynthesis; L-valine biosynthesis; L-valine from pyruvate: step 2/4. Involved in the biosynthesis of branched-chain amino acids (BCAA). Catalyzes an alkyl-migration followed by a ketol-acid reduction of (S)-2-acetolactate (S2AL) to yield (R)-2,3-dihydroxy-isovalerate. In the isomerase reaction, S2AL is rearranged via a Mg-dependent methyl migration to produce 3-hydroxy-3-methyl-2-ketobutyrate (HMKB). In the reductase reaction, this 2-ketoacid undergoes a metal-dependent reduction by NADPH to yield (R)-2,3-dihydroxy-isovalerate. This chain is Ketol-acid reductoisomerase (NADP(+)) 1, found in Bacillus thuringiensis subsp. konkukian (strain 97-27).